A 73-amino-acid chain; its full sequence is Large ribosomal subunit protein bL31 (73 aa).

Zn(2+) contacts are provided by C16, C18, C38, and C41.

It belongs to the bacterial ribosomal protein bL31 family. Type A subfamily. Part of the 50S ribosomal subunit. The cofactor is Zn(2+).

In terms of biological role, binds the 23S rRNA. This is Large ribosomal subunit protein bL31 from Vibrio vulnificus (strain YJ016).